A 533-amino-acid chain; its full sequence is DNA-directed RNA polymerase III subunit RPC3 (533 aa).

Residues 162–181 form a disordered region; it reads LVPDTDSSDRGPPPPAPTLV. Position 194 is a phosphoserine (Ser194). The tract at residues 197–228 is disordered; that stretch reads GKGKRRRSSDEDATGEPKAKKPRYTDNKEPSP. Over residues 211–227 the composition is skewed to basic and acidic residues; that stretch reads GEPKAKKPRYTDNKEPS.

Belongs to the eukaryotic RPC3/POLR3C RNA polymerase subunit family. As to quaternary structure, component of the RNA polymerase III complex consisting of 17 subunits: a ten-subunit horseshoe-shaped catalytic core composed of POLR3A/RPC1, POLR3B/RPC2, POLR1C/RPAC1, POLR1D/RPAC2, POLR3K/RPC10, POLR2E/RPABC1, POLR2F/RPABC2, POLR2H/RPABC3, POLR2K/RPABC4 and POLR2L/RPABC5; a mobile stalk composed of two subunits POLR3H/RPC8 and CRCP/RPC9, protruding from the core and functioning primarily in transcription initiation; and additional subunits homologous to general transcription factors of the RNA polymerase II machinery, POLR3C/RPC3-POLR3F/RPC6-POLR3G/RPC7 heterotrimer required for transcription initiation and POLR3D/RPC4-POLR3E/RPC5 heterodimer involved in both transcription initiation and termination. Directly interacts with POLR3G/RPC7 and POLR3GL. Directly interacts with POLR3F/RPC6. Interacts with GTF3C4. As part of the RNA polymerase III complex, interacts with PKP2.

The protein resides in the nucleus. Functionally, DNA-dependent RNA polymerase catalyzes the transcription of DNA into RNA using the four ribonucleoside triphosphates as substrates. Specific peripheric component of RNA polymerase III (Pol III) which synthesizes small non-coding RNAs including 5S rRNA, snRNAs, tRNAs and miRNAs from at least 500 distinct genomic loci. Part of POLR3C/RPC3-POLR3F/RPC6-POLR3G/RPC7 heterotrimer, coordinates the dynamics of Pol III stalk and clamp modules during the transition from apo to elongation state. Pol III plays a key role in sensing and limiting infection by intracellular bacteria and DNA viruses. Acts as a nuclear and cytosolic DNA sensor involved in innate immune response. Can sense non-self dsDNA that serves as template for transcription into dsRNA. The non-self RNA polymerase III transcripts, such as Epstein-Barr virus-encoded RNAs (EBERs) induce type I interferon and NF-kappa-B through the RIG-I pathway. Preferentially binds single-stranded DNA (ssDNA) in a sequence-independent manner. The chain is DNA-directed RNA polymerase III subunit RPC3 from Mus musculus (Mouse).